The chain runs to 260 residues: Dof zinc finger protein DOF1.2 (260 aa).

The Dof-type zinc finger occupies 38–92; it reads PACPRCASSNTKFCYYNNYSLSQPRYFCKGCRRYWTKGGSLRNIPVGGGCRKRSR. Residues C40, C43, C65, and C68 each coordinate Zn(2+). The tract at residues 83–124 is disordered; sequence VGGGCRKRSRSRQNSHKRFGRNENRPDGLINQDDGFQSSPPG. The segment covering 87-101 has biased composition (basic residues); sequence CRKRSRSRQNSHKRF.

It localises to the nucleus. In terms of biological role, transcription factor that binds specifically to a 5'-AA[AG]G-3' consensus core sequence. The sequence is that of Dof zinc finger protein DOF1.2 (DOF1.2) from Arabidopsis thaliana (Mouse-ear cress).